A 1096-amino-acid chain; its full sequence is Constitutive coactivator of PPAR-gamma-like protein 2 (1096 aa).

Low complexity predominate over residues 35–59; the sequence is QQQHLHRQLPPTAALAPGAPRAARG. Disordered regions lie at residues 35–113, 508–579, and 971–1096; these read QQQH…PPQL, NYLP…DGEP, and SRSS…RKED. Arg-58 bears the Omega-N-methylarginine mark. The span at 82–95 shows a compositional bias: basic residues; the sequence is TRHHHPAHHFHHHG. Pro residues predominate over residues 101–113; the sequence is LHPPLPPPPPPQL. Residues 540–559 show a composition bias toward basic and acidic residues; it reads HITEAFHHQPEWGNPNRDRG. Arg-977 bears the Omega-N-methylarginine mark. 2 stretches are compositionally biased toward basic and acidic residues: residues 1041–1050 and 1076–1096; these read IKEEKSDHRL and NREK…RKED. Lys-1042 participates in a covalent cross-link: Glycyl lysine isopeptide (Lys-Gly) (interchain with G-Cter in SUMO2).

Belongs to the constitutive coactivator of PPAR-gamma family. In terms of tissue distribution, expressed at low levels in a number of tissues.

In Homo sapiens (Human), this protein is Constitutive coactivator of PPAR-gamma-like protein 2 (FAM120C).